The primary structure comprises 265 residues: Orotidine 5'-phosphate decarboxylase (265 aa).

Substrate contacts are provided by residues D38, 60 to 62 (KTH), 91 to 100 (DRKFADIGNT), Y213, and R232. The Proton donor role is filled by K93.

This sequence belongs to the OMP decarboxylase family.

The enzyme catalyses orotidine 5'-phosphate + H(+) = UMP + CO2. It participates in pyrimidine metabolism; UMP biosynthesis via de novo pathway; UMP from orotate: step 2/2. The sequence is that of Orotidine 5'-phosphate decarboxylase (pyrG) from Mucor circinelloides f. lusitanicus (Mucor racemosus var. lusitanicus).